A 314-amino-acid polypeptide reads, in one-letter code: uncharacterized protein (314 aa).

Helical transmembrane passes span 23–43 (LALGPVHPGGPTLIDLLMALF) and 98–118 (MASGIGGALSGALGGVMGPLT). Gly residues predominate over residues 165-184 (GLGSGAGGGDVGGGGAGGTT). Residues 165-314 (GLGSGAGGGD…APDEKTDAGE (150 aa)) are disordered. Pro residues predominate over residues 190-202 (GPPPVPTSSPPTT). 2 stretches are compositionally biased toward low complexity: residues 203–212 (PAGAPTKSAT) and 219–232 (ASPASAHMGAAGMP). The chain crosses the membrane as a helical span at residues 221–241 (PASAHMGAAGMPMVPPGAMGA). The segment covering 294-314 (LLPEHKDFGRIAPDEKTDAGE) has biased composition (basic and acidic residues).

It localises to the cell membrane. This is an uncharacterized protein from Mycobacterium tuberculosis (strain ATCC 25618 / H37Rv).